A 456-amino-acid chain; its full sequence is Phospholipase A1 member A (456 aa).

The first 25 residues, 1–25 (MPPGPWESCFWVGGLILWLSVGSSG), serve as a signal peptide directing secretion. Asparagine 79 carries an N-linked (GlcNAc...) asparagine glycan. The active-site Nucleophile is serine 166. Aspartate 190 serves as the catalytic Charge relay system. Cysteines 245 and 258 form a disulfide. Residue histidine 260 is the Charge relay system of the active site. 2 cysteine pairs are disulfide-bonded: cysteine 282-cysteine 293 and cysteine 296-cysteine 304. A glycan (N-linked (GlcNAc...) asparagine) is linked at asparagine 365. The involved in the recognition of diacyl-phospholipids stretch occupies residues 374–456 (IPKQQRYGKG…VSCDLKIACV (83 aa)).

It belongs to the AB hydrolase superfamily. Lipase family. Widely expressed. Expressed in placenta, prostate and liver. Weakly or not expressed in skin, leukocytes, platelets, colon, spleen, lung, muscle and kidney.

Its subcellular location is the secreted. The enzyme catalyses a 1,2-diacyl-sn-glycero-3-phospho-L-serine + H2O = a 2-acyl-sn-glycero-3-phospho-L-serine + a fatty acid + H(+). It catalyses the reaction 1,2-di-(9Z)-octadecenoyl-sn-glycero-3-phospho-L-serine + H2O = 2-(9Z-octadecenoyl)-sn-glycero-3-phospho-L-serine + (9Z)-octadecenoate + H(+). The catalysed reaction is 1-hexadecanoyl-2-(5Z,8Z,11Z,14Z-eicosatetraenoyl)-sn-glycero-3-phospho-L-serine + H2O = 2-(5Z,8Z,11Z,14Z)-eicosatetraenoyl-sn-glycero-3-phospho-L-serine + hexadecanoate + H(+). It carries out the reaction a 1-acyl-sn-glycero-3-phospho-L-serine + H2O = sn-glycero-3-phospho-L-serine + a fatty acid + H(+). The enzyme catalyses 1-(9Z-octadecenoyl)-sn-glycero-3-phospho-L-serine + H2O = sn-glycero-3-phospho-L-serine + (9Z)-octadecenoate + H(+). Its function is as follows. Hydrolyzes the ester bond of the acyl group attached at the sn-1 position of phosphatidylserines (phospholipase A1 activity) and 1-acyl-2-lysophosphatidylserines (lysophospholipase activity) in the pathway of phosphatidylserines acyl chain remodeling. Cleaves phosphatidylserines exposed on the outer leaflet of the plasma membrane of apoptotic cells producing 2-acyl-1-lysophosphatidylserines, which in turn enhance mast cell activation and histamine production. Has no activity toward other glycerophospholipids including phosphatidylcholines, phosphatidylethanolamines, phosphatidic acids or phosphatidylinositols, or glycerolipids such as triolein. In terms of biological role, hydrolyzes lyso-PS but not PS. The protein is Phospholipase A1 member A of Homo sapiens (Human).